A 125-amino-acid chain; its full sequence is Small ribosomal subunit protein bS6 (125 aa).

Residues 101–125 (PMMKEEKAKNLLAPQSDAAEPTAAA) form a disordered region.

The protein belongs to the bacterial ribosomal protein bS6 family.

Binds together with bS18 to 16S ribosomal RNA. The sequence is that of Small ribosomal subunit protein bS6 from Laribacter hongkongensis (strain HLHK9).